We begin with the raw amino-acid sequence, 1826 residues long: Protein TIC 214 (1826 aa).

Transmembrane regions (helical) follow at residues 18–38, 67–87, 127–147, 175–195, and 221–241; these read IINS…FSIG, FITG…HLAL, LSIQ…HFIL, VGWL…LVWI, and IFSI…PSPI. Residues 250 to 308 are disordered; sequence TEEGWESEEETDVEIETASETKGTKQEQEGSTEEDPSPSLFSEEKEDPDKIDETEEIRV. Composition is skewed to acidic residues over residues 252–266 and 293–304; these read EGWE…EIET and EKEDPDKIDETE. A helical transmembrane segment spans residues 774–794; the sequence is LILIIQSIFRKYILLPSLIIV. The disordered stretch occupies residues 1032-1057; the sequence is TKGLMKEKNSNAKKRGSPNKTSFNRK. Positions 1042–1057 are enriched in basic residues; sequence NAKKRGSPNKTSFNRK. A helical membrane pass occupies residues 1081–1101; it reads FYLFITIFIKRIYIDIFVCII.

This sequence belongs to the TIC214 family. Part of the Tic complex.

Its subcellular location is the plastid. It is found in the chloroplast inner membrane. Involved in protein precursor import into chloroplasts. May be part of an intermediate translocation complex acting as a protein-conducting channel at the inner envelope. The sequence is that of Protein TIC 214 from Daucus carota (Wild carrot).